Here is a 399-residue protein sequence, read N- to C-terminus: Phosphoglycerate kinase (399 aa).

Residues 22-24 (DFN), R38, 61-64 (HLGR), R119, and R152 contribute to the substrate site. ATP contacts are provided by residues K205, G296, E327, and 353 to 356 (GGDT).

Belongs to the phosphoglycerate kinase family. In terms of assembly, monomer.

It localises to the cytoplasm. It catalyses the reaction (2R)-3-phosphoglycerate + ATP = (2R)-3-phospho-glyceroyl phosphate + ADP. Its pathway is carbohydrate degradation; glycolysis; pyruvate from D-glyceraldehyde 3-phosphate: step 2/5. This is Phosphoglycerate kinase from Nitratiruptor sp. (strain SB155-2).